The following is a 507-amino-acid chain: Alkyl hydroperoxide reductase subunit F (507 aa).

An FAD-binding site is contributed by Asp-207–Ile-222. Cys-335 and Cys-338 are oxidised to a cystine. Asp-347–Ala-361 lines the NAD(+) pocket. Thr-467–Asp-477 provides a ligand contact to FAD.

The protein belongs to the class-II pyridine nucleotide-disulfide oxidoreductase family. As to quaternary structure, homodimer. FAD serves as cofactor.

Serves to protect the cell against DNA damage by alkyl hydroperoxides. It can use either NADH or NADPH as electron donor for direct reduction of redox dyes or of alkyl hydroperoxides when combined with the AhpC protein. The chain is Alkyl hydroperoxide reductase subunit F (ahpF) from Staphylococcus aureus (strain MSSA476).